Reading from the N-terminus, the 112-residue chain is MENRFEISMLIDYYGTLLTEKQFNVMTLYYNEDLSLAEIAEINKTSRQAIYDLIKRCCKQLHSYDEKLKLSKKIDKRYRIKEELMAELNKNSNLDEDIKKYIDEKLEEIINA.

This sequence belongs to the UPF0122 family.

Its function is as follows. Might take part in the signal recognition particle (SRP) pathway. This is inferred from the conservation of its genetic proximity to ftsY/ffh. May be a regulatory protein. The chain is UPF0122 protein CPF_1968 from Clostridium perfringens (strain ATCC 13124 / DSM 756 / JCM 1290 / NCIMB 6125 / NCTC 8237 / Type A).